Consider the following 359-residue polypeptide: 3-dehydroquinate synthase (359 aa).

NAD(+) is bound by residues 71-76, 105-109, 129-130, K142, and K151; these read DGEAYK, GVIGD, and TT. Zn(2+) contacts are provided by E184, H247, and H264.

It belongs to the sugar phosphate cyclases superfamily. Dehydroquinate synthase family. Co(2+) is required as a cofactor. Requires Zn(2+) as cofactor. The cofactor is NAD(+).

Its subcellular location is the cytoplasm. The enzyme catalyses 7-phospho-2-dehydro-3-deoxy-D-arabino-heptonate = 3-dehydroquinate + phosphate. Its pathway is metabolic intermediate biosynthesis; chorismate biosynthesis; chorismate from D-erythrose 4-phosphate and phosphoenolpyruvate: step 2/7. Functionally, catalyzes the conversion of 3-deoxy-D-arabino-heptulosonate 7-phosphate (DAHP) to dehydroquinate (DHQ). This is 3-dehydroquinate synthase from Burkholderia vietnamiensis (strain G4 / LMG 22486) (Burkholderia cepacia (strain R1808)).